A 500-amino-acid chain; its full sequence is Probable cytosol aminopeptidase (500 aa).

The Mn(2+) site is built by K268 and D273. K280 is an active-site residue. The Mn(2+) site is built by D291, D350, and E352. R354 is a catalytic residue.

Belongs to the peptidase M17 family. Mn(2+) serves as cofactor.

It localises to the cytoplasm. It carries out the reaction Release of an N-terminal amino acid, Xaa-|-Yaa-, in which Xaa is preferably Leu, but may be other amino acids including Pro although not Arg or Lys, and Yaa may be Pro. Amino acid amides and methyl esters are also readily hydrolyzed, but rates on arylamides are exceedingly low.. The enzyme catalyses Release of an N-terminal amino acid, preferentially leucine, but not glutamic or aspartic acids.. Functionally, presumably involved in the processing and regular turnover of intracellular proteins. Catalyzes the removal of unsubstituted N-terminal amino acids from various peptides. The polypeptide is Probable cytosol aminopeptidase (Baumannia cicadellinicola subsp. Homalodisca coagulata).